The following is a 615-amino-acid chain: MATKNSKQNMSVLLTKLGDRDTFTMAARELDLMARQIDPSSSSGNLQSFISVILSVDTGDKPAVRKHCIHLLAVLSVSLPLNSLSPFLSKILTRITRRLRDPDSSIRSTCVAAVSAISSRTTKPPFYSAFMKPLADTLFTEQEVNAQIGAALCLAAAIDSASDPDPVRLGQTLLPRLEKLVKCNAFKAKSAGVVVIGSVIGAGGLSGTSVSSGGLKGLVDCLLSFLVSEDWAARKAAAEALGRLATMERNELGEFKAKCLKIFESRKYDKVKAVREVMNQMMEAWKQVPDLSEEVSPPRSNASSKGDASDGRYPSGSRVGSTPAKSRTHLVNRSTPPGSSLATTARKQANRKSIDQKKTSLTASLTKPNVRRRLEWKAGGASIPTGVSLEDEQHCDHDENAKETSHSSHNTVQKLGGVSSSLNGNIPPSGATMVTGHHVLSENPNSNNCKGLEDISLIRNQLVQIEQQQANLMDLLQRFVGSSQHGMRGLETRVHGLELALDEISYDLAVSNGRMSNGSSRNNCCLLPSGSFIKSKFWKKHDSKYSASRMSTYRNRNAETTEIQNSRHRFNGSPGFIVNPLAEIRPDNDLQVCLTIEGRRETKPSKASETLKTTV.

5 HEAT repeats span residues 44-81, 86-123, 125-163, 168-205, and 213-250; these read GNLQ…SLPL, PFLS…RTTK, PFYS…SASD, RLGQ…AGGL, and GGLK…MERN. The disordered stretch occupies residues 288 to 446; sequence VPDLSEEVSP…HHVLSENPNS (159 aa). Positions 318 to 347 are enriched in polar residues; it reads RVGSTPAKSRTHLVNRSTPPGSSLATTARK. Basic and acidic residues predominate over residues 391–406; it reads DEQHCDHDENAKETSH. Positions 407–426 are enriched in polar residues; it reads SSHNTVQKLGGVSSSLNGNI. Ser456 carries the phosphoserine modification.

This Arabidopsis thaliana (Mouse-ear cress) protein is TORTIFOLIA1-like protein 3.